The chain runs to 128 residues: Arginine decarboxylase proenzyme (128 aa).

Ser76 acts as the Schiff-base intermediate with substrate; via pyruvic acid in catalysis. Ser76 bears the Pyruvic acid (Ser); by autocatalysis mark. His81 (proton acceptor; for processing activity) is an active-site residue. Cys96 acts as the Proton donor; for catalytic activity in catalysis.

The protein belongs to the prokaryotic AdoMetDC family. Type 1 subfamily. As to quaternary structure, heterooctamer of four alpha and four beta chains arranged as a tetramer of alpha/beta heterodimers. The cofactor is pyruvate. In terms of processing, is synthesized initially as an inactive proenzyme. Formation of the active enzyme involves a self-maturation process in which the active site pyruvoyl group is generated from an internal serine residue via an autocatalytic post-translational modification. Two non-identical subunits are generated from the proenzyme in this reaction, and the pyruvate is formed at the N-terminus of the alpha chain, which is derived from the carboxyl end of the proenzyme. The post-translation cleavage follows an unusual pathway, termed non-hydrolytic serinolysis, in which the side chain hydroxyl group of the serine supplies its oxygen atom to form the C-terminus of the beta chain, while the remainder of the serine residue undergoes an oxidative deamination to produce ammonia and the pyruvoyl group blocking the N-terminus of the alpha chain.

It carries out the reaction L-arginine + H(+) = agmatine + CO2. The protein operates within amine and polyamine biosynthesis; agmatine biosynthesis; agmatine from L-arginine: step 1/1. In terms of biological role, specifically catalyzes the decarboxylation of L-arginine to agmatine. Has no S-adenosylmethionine decarboxylase (AdoMetDC) activity. This Sulfurisphaera tokodaii (strain DSM 16993 / JCM 10545 / NBRC 100140 / 7) (Sulfolobus tokodaii) protein is Arginine decarboxylase proenzyme.